A 193-amino-acid polypeptide reads, in one-letter code: Ion-translocating oxidoreductase complex subunit A (193 aa).

Helical transmembrane passes span 5-25 (ALLF…FLGL), 39-59 (IGMG…SWLV), 62-82 (FILV…LVLA), 102-122 (LLGI…VVLL), 134-154 (TIYG…FAAI), and 171-191 (SIAL…TGLV).

It belongs to the NqrDE/RnfAE family. As to quaternary structure, the complex is composed of six subunits: RnfA, RnfB, RnfC, RnfD, RnfE and RnfG.

The protein resides in the cell inner membrane. Functionally, part of a membrane-bound complex that couples electron transfer with translocation of ions across the membrane. The chain is Ion-translocating oxidoreductase complex subunit A from Pectobacterium carotovorum subsp. carotovorum (strain PC1).